A 319-amino-acid polypeptide reads, in one-letter code: mRNA decay activator protein ZFP36 (319 aa).

Residues 1 to 15 (MDLSAIYESLQSMSH) form a necessary for nuclear export region. A necessary and sufficient for the association with mRNA decay enzymes and mRNA decay activation region spans residues 1 to 92 (MDLSAIYESL…PTSPTATPTT (92 aa)). 2 necessary for localization of ARE-containing mRNAs to processing bodies (PBs) regions span residues 1 to 166 (MDLS…DLAL) and 92 to 319 (TSSR…SVSE). S52 bears the Phosphoserine; by MAPKAPK2 mark. S58 bears the Phosphoserine mark. The stretch at 63 to 67 (PPPPG) is one P-P-P-P-G repeat. Over residues 65–84 (PPGFAPLAPRPGPELSPSPT) the composition is skewed to pro residues. The interval 65-95 (PPGFAPLAPRPGPELSPSPTSPTATPTTSSR) is disordered. Residues S80 and S82 each carry the phosphoserine modification. At T84 the chain carries Phosphothreonine. S85 is modified (phosphoserine). Over residues 85–94 (SPTATPTTSS) the composition is skewed to low complexity. Residues 87–160 (TATPTTSSRY…GSRCHFIHNP (74 aa)) form a necessary for nuclear localization region. The interval 89 to 165 (TPTTSSRYKT…FIHNPTEDLA (77 aa)) is necessary for RNA-binding. 2 consecutive C3H1-type zinc fingers follow at residues 95-123 (RYKT…HGLG) and 133-161 (KYKT…HNPT). A necessary for interaction with PABPN1 region spans residues 95–186 (RYKTELCRTY…ISFSGLPSGR (92 aa)). A necessary for mRNA decay activation region spans residues 166–319 (LPGQPHVLRQ…PIFNRISVSE (154 aa)). S178 bears the Phosphoserine; by MAPKAPK2 mark. The span at 179–188 (FSGLPSGRRS) shows a compositional bias: low complexity. The segment at 179 to 309 (FSGLPSGRRS…PQTPAPPRRL (131 aa)) is disordered. The residue at position 189 (S189) is a Phosphoserine. Residues 190-194 (PPPPG) form a P-P-P-P-G repeat. Low complexity predominate over residues 196–208 (SGPSLSSCSFSPS). S210 bears the Phosphoserine mark. The stretch at 211–215 (PPPPG) is one P-P-P-P-G repeat. A Phosphoserine; by MAPK1; in vitro modification is found at S220. T250 carries the phosphothreonine modification. S269, S289, and S316 each carry phosphoserine. The segment covering 279-289 (SSGSSLGGSDS) has biased composition (low complexity). The tract at residues 305-319 (PPRRLPIFNRISVSE) is interaction with CNOT1.

In terms of assembly, associates with cytoplasmic CCR4-NOT and PAN2-PAN3 deadenylase complexes to trigger ARE-containing mRNA deadenylation and decay processes. Part of a mRNA decay activation complex at least composed of poly(A)-specific exoribonucleases CNOT6, EXOSC2 and XRN1 and mRNA-decapping enzymes DCP1A and DCP2. Associates with the RNA exosome complex. Interacts (via phosphorylated form) with 14-3-3 proteins; these interactions promote exclusion of ZFP36 from cytoplasmic stress granules in response to arsenite treatment in a MAPKAPK2-dependent manner and does not prevent CCR4-NOT deadenylase complex recruitment or ZFP36-induced ARE-containing mRNA deadenylation and decay processes. Interacts with 14-3-3 proteins; these interactions occur in response to rapamycin in an Akt-dependent manner. Interacts with AGO2 and AGO4. Interacts (via C-terminus) with CNOT1; this interaction occurs in a RNA-independent manner and induces mRNA deadenylation. Interacts (via N-terminus) with CNOT6. Interacts with CNOT6L. Interacts (via C-terminus) with CNOT7; this interaction occurs in a RNA-independent manner, induces mRNA deadenylation and is inhibited in a phosphorylation MAPKAPK2-dependent manner. Interacts (via unphosphorylated form) with CNOT8; this interaction occurs in a RNA-independent manner and is inhibited in a phosphorylation MAPKAPK2-dependent manner. Interacts with DCP1A. Interacts (via N-terminus) with DCP2. Interacts with EDC3. Interacts (via N-terminus) with EXOSC2. Interacts with heat shock 70 kDa proteins. Interacts with KHSRP; this interaction increases upon cytokine-induced treatment. Interacts with MAP3K4; this interaction enhances the association with SH3KBP1/CIN85. Interacts with MAPKAPK2; this interaction occurs upon skeletal muscle satellite cell activation. Interacts with NCL. Interacts with NUP214; this interaction increases upon lipopolysaccharide (LPS) stimulation. Interacts with PABPC1; this interaction occurs in a RNA-dependent manner. Interacts (via hypophosphorylated form) with PABPN1 (via RRM domain and C-terminal arginine-rich region); this interaction occurs in the nucleus in a RNA-independent manner, decreases in presence of single-stranded poly(A) RNA-oligomer and in a p38 MAPK-dependent-manner and inhibits nuclear poly(A) tail synthesis. Interacts with PAN2. Interacts (via C3H1-type zinc finger domains) with PKM. Interacts (via C3H1-type zinc finger domains) with nuclear RNA poly(A) polymerase. Interacts with PPP2CA; this interaction occurs in LPS-stimulated cells and induces ZFP36 dephosphorylation, and hence may promote ARE-containing mRNAs decay. Interacts (via C-terminus) with PRR5L (via C-terminus); this interaction may accelerate ZFP36-mediated mRNA decay during stress. Interacts (via C-terminus) with SFN; this interaction occurs in a phosphorylation-dependent manner. Interacts (via extreme C-terminal region) with SH3KBP1/CIN85 (via SH3 domains); this interaction enhances MAP3K4-induced phosphorylation of ZFP36 at Ser-58 and Ser-85 and does not alter neither ZFP36 binding to ARE-containing transcripts nor TNF-alpha mRNA decay. Interacts with XRN1. Interacts (via C-terminus and Ser-178 phosphorylated form) with YWHAB; this interaction occurs in a p38/MAPKAPK2-dependent manner, increases cytoplasmic localization of ZFP36 and protects ZFP36 from Ser-178 dephosphorylation by serine/threonine phosphatase 2A, and hence may be crucial for stabilizing ARE-containing mRNAs. Interacts (via phosphorylated form) with YWHAE. Interacts (via C-terminus) with YWHAG; this interaction occurs in a phosphorylation-dependent manner. Interacts with YWHAH; this interaction occurs in a phosphorylation-dependent manner. Interacts with YWHAQ; this interaction occurs in a phosphorylation-dependent manner. Interacts with (via C-terminus) YWHAZ; this interaction occurs in a phosphorylation-dependent manner. Does not interact with SH3KBP1. Interacts (via the 4EHP-binding motif) with EIF4E2; the interaction is direct. Interacts (via P-P-P-P-G repeats) with GIGYF2; the interaction is direct. Phosphorylated. Phosphorylation at serine and/or threonine residues occurs in a p38 MAPK- and MAPKAPK2-dependent manner. Phosphorylated by MAPKAPK2 at Ser-52 and Ser-178; phosphorylation increases its stability and cytoplasmic localization, promotes binding to 14-3-3 adapter proteins and inhibits the recruitment of cytoplasmic CCR4-NOT and PAN2-PAN3 deadenylase complexes to the mRNA decay machinery, thereby inhibiting ZFP36-induced ARE-containing mRNA deadenylation and decay processes. Phosphorylation by MAPKAPK2 does not impair ARE-containing RNA-binding. Phosphorylated in a MAPKAPK2- and p38 MAPK-dependent manner upon skeletal muscle satellite cell activation; this phosphorylation inhibits ZFP36-mediated mRNA decay activity, and hence stabilizes MYOD1 mRNA. Phosphorylated by MAPK1 upon mitogen stimulation. Phosphorylated at Ser-58 and Ser-85; these phosphorylations increase in a SH3KBP1-dependent manner. Phosphorylated at serine and threonine residues in a pyruvate kinase PKM- and p38 MAPK-dependent manner. Phosphorylation at Ser-52 may participate in the PKM-mediated degradation of ZFP36 in a p38 MAPK-dependent manner. Dephosphorylated by serine/threonine phosphatase 2A at Ser-178. In terms of processing, ubiquitinated; pyruvate kinase (PKM)-dependent ubiquitination leads to proteasomal degradation through a p38 MAPK signaling pathway. Expressed in skeletal muscle satellite cells. Strongly expressed in differentiated adipocytes compared to preadipocytes (at protein level). Expressed in embryonic stem cells (ESCs). Expressed in heart, placenta, kidney, intestine, liver, lung, thymus, fat and spleen.

The protein localises to the nucleus. It is found in the cytoplasm. Its subcellular location is the cytoplasmic granule. The protein resides in the P-body. Functionally, zinc-finger RNA-binding protein that destabilizes numerous cytoplasmic AU-rich element (ARE)-containing mRNA transcripts by promoting their poly(A) tail removal or deadenylation, and hence provide a mechanism for attenuating protein synthesis. Acts as an 3'-untranslated region (UTR) ARE mRNA-binding adapter protein to communicate signaling events to the mRNA decay machinery. Recruits deadenylase CNOT7 (and probably the CCR4-NOT complex) via association with CNOT1, and hence promotes ARE-mediated mRNA deadenylation. Also functions by recruiting components of the cytoplasmic RNA decay machinery to the bound ARE-containing mRNAs. Self-regulates by destabilizing its own mRNA. Binds to 3'-UTR ARE of numerous mRNAs and of its own mRNA. Plays a role in anti-inflammatory responses; suppresses tumor necrosis factor (TNF)-alpha production by stimulating ARE-mediated TNF-alpha mRNA decay and several other inflammatory ARE-containing mRNAs in interferon (IFN)- and/or lipopolysaccharide (LPS)-induced macrophages. Also plays a role in the regulation of dendritic cell maturation at the post-transcriptional level, and hence operates as part of a negative feedback loop to limit the inflammatory response. Promotes ARE-mediated mRNA decay of hypoxia-inducible factor HIF1A mRNA during the response of endothelial cells to hypoxia. Positively regulates early adipogenesis of preadipocytes by promoting ARE-mediated mRNA decay of immediate early genes (IEGs). Negatively regulates hematopoietic/erythroid cell differentiation by promoting ARE-mediated mRNA decay of the transcription factor STAT5B mRNA. Plays a role in maintaining skeletal muscle satellite cell quiescence by promoting ARE-mediated mRNA decay of the myogenic determination factor MYOD1 mRNA. Also associates with and regulates the expression of non-ARE-containing target mRNAs at the post-transcriptional level, such as MHC class I mRNAs. Participates in association with argonaute RISC catalytic components in the ARE-mediated mRNA decay mechanism; assists microRNA (miRNA) targeting ARE-containing mRNAs. May also play a role in the regulation of cytoplasmic mRNA decapping; enhances decapping of ARE-containing RNAs, in vitro. Involved in the delivery of target ARE-mRNAs to processing bodies (PBs). In addition to its cytosolic mRNA-decay function, affects nuclear pre-mRNA processing. Negatively regulates nuclear poly(A)-binding protein PABPN1-stimulated polyadenylation activity on ARE-containing pre-mRNA during LPS-stimulated macrophages. Also involved in the regulation of stress granule (SG) and P-body (PB) formation and fusion. Plays a role in the regulation of keratinocyte proliferation, differentiation and apoptosis. Plays a role as a tumor suppressor by inhibiting cell proliferation in breast cancer cells. This Mus musculus (Mouse) protein is mRNA decay activator protein ZFP36.